Consider the following 547-residue polypeptide: Chaperonin GroEL 1 (547 aa).

Residues 30-33 (TLGP), Lys-51, 87-91 (DGTTT), Gly-415, and Asp-496 contribute to the ATP site.

This sequence belongs to the chaperonin (HSP60) family. In terms of assembly, forms a cylinder of 14 subunits composed of two heptameric rings stacked back-to-back. Interacts with the co-chaperonin GroES.

It is found in the cytoplasm. It carries out the reaction ATP + H2O + a folded polypeptide = ADP + phosphate + an unfolded polypeptide.. Together with its co-chaperonin GroES, plays an essential role in assisting protein folding. The GroEL-GroES system forms a nano-cage that allows encapsulation of the non-native substrate proteins and provides a physical environment optimized to promote and accelerate protein folding. The sequence is that of Chaperonin GroEL 1 from Bradyrhizobium sp. (strain BTAi1 / ATCC BAA-1182).